The chain runs to 406 residues: Immediate early response gene 5-like protein (406 aa).

Disordered regions lie at residues Gln-166–Ala-195 and Ala-216–Ser-235. Pro residues predominate over residues Gln-182–Pro-193.

The protein belongs to the IER family.

The protein is Immediate early response gene 5-like protein (Ier5l) of Mus musculus (Mouse).